Consider the following 1030-residue polypeptide: E3 ubiquitin-protein ligase mib1 (1030 aa).

The 69-residue stretch at 6-74 (NNRVMMEGVG…AYDVRILDSA (69 aa)) folds into the MIB/HERC2 1 domain. The ZZ-type zinc-finger motif lies at 80-132 (HDGTMCDTCRQQPIIGIRWKCAECTNYDLCTTCYHGDKHHLRHRFYRITTPGS). Residues Cys85, Cys88, Cys100, Cys103, Cys109, Cys112, His118, and His122 each contribute to the Zn(2+) site. Residues 143-221 (SKKITARGIF…MSDLKCVQDA (79 aa)) form the MIB/HERC2 2 domain. 9 ANK repeats span residues 430 to 460 (DINE…DVNG), 463 to 492 (AGHT…DLEA), 496 to 525 (DGDR…DLNA), 529 to 558 (RRQT…HPSL), 562 to 591 (EGDT…DVTI), 595 to 627 (NGFN…IVDE), 631 to 661 (DGYT…NLDV), 665 to 694 (NQQT…KLDV), and 698 to 727 (DGDT…VSKV). RING-type zinc fingers lie at residues 817-852 (CMVC…LICK) and 864-899 (CVVC…VQCR). A coiled-coil region spans residues 957-986 (ALQRDKDNTNVNADVQKLQQQLQDIKEQTM). An RING-type 3 zinc finger spans residues 987-1020 (CPVCLDRLKNMIFMCGHGTCQLCGDRMSECPICR).

In terms of assembly, interacts with deltaA (dla) and deltaD (dld).

The protein resides in the cytoplasm. The protein localises to the cytoskeleton. It is found in the microtubule organizing center. It localises to the centrosome. Its subcellular location is the centriolar satellite. The protein resides in the cell membrane. The enzyme catalyses S-ubiquitinyl-[E2 ubiquitin-conjugating enzyme]-L-cysteine + [acceptor protein]-L-lysine = [E2 ubiquitin-conjugating enzyme]-L-cysteine + N(6)-ubiquitinyl-[acceptor protein]-L-lysine.. The protein operates within protein modification; protein ubiquitination. In terms of biological role, E3 ubiquitin-protein ligase that mediates ubiquitination of Delta receptors, which act as ligands of Notch proteins. Positively regulates the Delta-mediated Notch signaling by ubiquitinating the intracellular domain of Delta, leading to endocytosis of Delta receptors. It thereby participates in many processes regulated by the Notch signaling pathway, such as midline cell fate specification prior to germ layer formation, patterning of sensory cell differentiation in the ear, neurogenesis of the hindbrain and commitment to a secretory fate in the intestine. Essential for early embryonic development. This is E3 ubiquitin-protein ligase mib1 (mib1) from Danio rerio (Zebrafish).